The primary structure comprises 706 residues: Cyclic nucleotide-gated channel alpha-3 (706 aa).

Topologically, residues 1-189 are cytoplasmic; that stretch reads MAKISTQYSH…MDPSSNMYYH (189 aa). The segment at 113–177 is disordered; that stretch reads RESHVQFNVG…PKKEEKKKDS (65 aa). A compositionally biased stretch (basic and acidic residues) spans 147–177; it reads SEKDDKAKKEEKEKKEEKKENPKKEEKKKDS. The chain crosses the membrane as a helical span at residues 190-211; the sequence is WLTVIAVPVFYNWCLLVCRACF. At 212–217 the chain is on the extracellular side; that stretch reads DELQSE. A helical transmembrane segment spans residues 218–238; it reads HLMLWLVLDYSADILYGMDML. Residues 239–265 are Cytoplasmic-facing; it reads VRARTGFLEQGLMVMDASRLWKHYTQT. A helical transmembrane segment spans residues 266-285; it reads LHFKLDVLSLVPTDLAYFKL. Topologically, residues 286–289 are extracellular; the sequence is GMNY. A helical transmembrane segment spans residues 290–307; the sequence is PELRFNRLLKLARLFEFF. Topologically, residues 308–317 are cytoplasmic; sequence DRTETRTNYP. Residues 317 to 425 are ion conduction pathway; that stretch reads PNMFRIGNLV…GNVGSMISNM (109 aa). Residues 318-340 traverse the membrane as a helical segment; sequence NMFRIGNLVLYILIIIHWNACIY. Residues 341-366 lie on the Extracellular side of the membrane; the sequence is FAISKFIGFGTDSWVYPNVSNPEYGR. The N-linked (GalNAc...) asparagine glycan is linked to Asn358. The next 2 helical transmembrane spans lie at 367–397 and 398–422; these read LSRK…DEEY and LFVV…GSMI. The selectivity filter stretch occupies residues 384–387; that stretch reads TIGE. Over 423-706 the chain is Cytoplasmic; it reads SNMNASRAEF…DAPQTEASQP (284 aa). Residues 427-504 form a C-linker region; the sequence is ASRAEFQAKI…TLRKVRIFQD (78 aa). The cyclic nucleotide-binding domain stretch occupies residues 507–627; it reads AGLLVELVLK…EEKGRQILMK (121 aa). The 3',5'-cyclic GMP site is built by Gly567, Glu568, Ser570, Arg583, Thr584, and Asp628. Residues 645–688 adopt a coiled-coil conformation; it reads IEEKVEHLETSLDSLQTRFARLLAEYNATQMKVKQRLSQLESQV. Residues 685-706 form a disordered region; sequence ESQVKMGLPPDGDAPQTEASQP.

This sequence belongs to the cyclic nucleotide-gated cation channel (TC 1.A.1.5) family. CNGA3 subfamily. As to quaternary structure, forms heterotetrameric channels composed of CNGA3 and CNGB3 subunits with 3:1 stoichiometry. In terms of tissue distribution, testis, kidney, retinal cone (at protein level) and heart.

The protein localises to the cell membrane. It catalyses the reaction Ca(2+)(in) = Ca(2+)(out). The enzyme catalyses Na(+)(in) = Na(+)(out). It carries out the reaction K(+)(in) = K(+)(out). The catalysed reaction is NH4(+)(in) = NH4(+)(out). It catalyses the reaction Rb(+)(in) = Rb(+)(out). The enzyme catalyses Li(+)(in) = Li(+)(out). It carries out the reaction Cs(+)(in) = Cs(+)(out). Its activity is regulated as follows. Ca(2+) influx is inhibited by extracellular Mg(2+) ions. In terms of biological role, pore-forming subunit of the cone cyclic nucleotide-gated channel. Mediates cone photoresponses at bright light converting transient changes in intracellular cGMP levels into electrical signals. In the dark, cGMP levels are high and keep the channel open enabling a steady inward current carried by Na(+) and Ca(2+) ions that leads to membrane depolarization and neurotransmitter release from synaptic terminals. Upon photon absorption cGMP levels decline leading to channel closure and membrane hyperpolarization that ultimately slows neurotransmitter release and signals the presence of light, the end point of the phototransduction cascade. Pore-forming subunit of the gustatory cyclic nucleotide-gated channel. In the taste buds, may sense oral extracellular pH and conduct ion currents that modulate the excitability of taste cells. Conducts cGMP- and cAMP-gated ion currents, with permeability for monovalent and divalent cations. The polypeptide is Cyclic nucleotide-gated channel alpha-3 (Bos taurus (Bovine)).